The chain runs to 130 residues: uncharacterized protein (130 aa).

The interval 1–104 is disordered; the sequence is MRPGSSPRAP…RGRWGLRGGP (104 aa). Low complexity predominate over residues 88–97; that stretch reads RRQPGPQRGR.

This is an uncharacterized protein from Homo sapiens (Human).